The following is a 388-amino-acid chain: S-adenosylmethionine synthase (388 aa).

H16 contacts ATP. D18 serves as a coordination point for Mg(2+). E44 provides a ligand contact to K(+). L-methionine contacts are provided by E57 and Q100. The segment at 100–110 (QSPDIAQGVDK) is flexible loop. ATP is bound by residues 167 to 169 (DAK), 233 to 234 (RF), D242, 248 to 249 (RK), A265, and K269. D242 serves as a coordination point for L-methionine. L-methionine is bound at residue K273.

This sequence belongs to the AdoMet synthase family. Homotetramer; dimer of dimers. Mg(2+) serves as cofactor. The cofactor is K(+).

The protein localises to the cytoplasm. The enzyme catalyses L-methionine + ATP + H2O = S-adenosyl-L-methionine + phosphate + diphosphate. Its pathway is amino-acid biosynthesis; S-adenosyl-L-methionine biosynthesis; S-adenosyl-L-methionine from L-methionine: step 1/1. Functionally, catalyzes the formation of S-adenosylmethionine (AdoMet) from methionine and ATP. The overall synthetic reaction is composed of two sequential steps, AdoMet formation and the subsequent tripolyphosphate hydrolysis which occurs prior to release of AdoMet from the enzyme. The chain is S-adenosylmethionine synthase from Polynucleobacter necessarius subsp. necessarius (strain STIR1).